A 470-amino-acid chain; its full sequence is Low molecular weight neuronal intermediate filament (470 aa).

Residues 1–91 form a head region; that stretch reads MTSRELYTSS…KIVRTNEKEQ (91 aa). Residues 88–399 form the IF rod domain; sequence EKEQLQGLND…KLLEGEETRL (312 aa). A coil 1A region spans residues 91 to 123; it reads QLQGLNDRFVTYIEKVHHLEQQNKLLESEVTLL. Positions 121 to 136 are linker 1; the sequence is TLLRQKHSEPSRLSHI. The segment at 137–232 is coil 1B; that stretch reads YEQEIRELRS…KVHEEEIAEL (96 aa). The linker 12 stretch occupies residues 233-251; sequence QASVQEAQISVEMDVVSKP. Positions 252-270 are coil 2A; it reads DLTAALKEIRMQYEVLSAR. A linker 2 region spans residues 271–279; it reads NQQSSEEWY. The interval 280-395 is coil 2B; sequence QAKIANVSLE…AAYRKLLEGE (116 aa). The tail stretch occupies residues 396–470; that stretch reads ETRLTSVGGG…EKISQKAAAN (75 aa). A compositionally biased stretch (low complexity) spans 414 to 431; it reads FSSGSYSGGRSSTTSTIS. Positions 414–470 are disordered; sequence FSSGSYSGGRSSTTSTISIRKEEKKESPEGGKGGSSGQPKTSKPGDQEKISQKAAAN. A compositionally biased stretch (basic and acidic residues) spans 432–442; it reads IRKEEKKESPE.

This sequence belongs to the intermediate filament family. In terms of tissue distribution, nervous system; in axons in the PNS and in small perikarya in the dorsal root ganglion.

The protein is Low molecular weight neuronal intermediate filament of Xenopus laevis (African clawed frog).